Here is a 165-residue protein sequence, read N- to C-terminus: MQGRYSAPLFLLLWLFFLHGTLCEQVLQTFTGEIGAGNYTYFTLNREGEITLILESTEGDADLYISQNVAKPDYENYDLQSSTCGQDVVTIPVEFKRPIGIGVLGHANSPLSKYTMTVVVDYGTGMAEDKNRWYSASEEGGEPQEESLIWMIFVGILKIIFEILL.

The N-terminal stretch at 1–23 (MQGRYSAPLFLLLWLFFLHGTLC) is a signal peptide. A glycan (N-linked (GlcNAc...) asparagine) is linked at asparagine 38.

Belongs to the UPF0669 family.

The protein resides in the secreted. This chain is UPF0669 protein v1g209471, found in Nematostella vectensis (Starlet sea anemone).